Consider the following 240-residue polypeptide: Ubiquinone biosynthesis O-methyltransferase (240 aa).

Arg-44, Gly-64, Asp-85, and Met-129 together coordinate S-adenosyl-L-methionine.

It belongs to the methyltransferase superfamily. UbiG/COQ3 family.

The enzyme catalyses a 3-demethylubiquinol + S-adenosyl-L-methionine = a ubiquinol + S-adenosyl-L-homocysteine + H(+). It catalyses the reaction a 3-(all-trans-polyprenyl)benzene-1,2-diol + S-adenosyl-L-methionine = a 2-methoxy-6-(all-trans-polyprenyl)phenol + S-adenosyl-L-homocysteine + H(+). Its pathway is cofactor biosynthesis; ubiquinone biosynthesis. O-methyltransferase that catalyzes the 2 O-methylation steps in the ubiquinone biosynthetic pathway. The protein is Ubiquinone biosynthesis O-methyltransferase of Escherichia coli O157:H7.